Consider the following 502-residue polypeptide: Probable cobyric acid synthase (502 aa).

In terms of domain architecture, GATase cobBQ-type spans 250–448 (KITIGTLRLP…FHGIFHNFEF (199 aa)). The active-site Nucleophile is the C330. Residue H440 is part of the active site.

This sequence belongs to the CobB/CobQ family. CobQ subfamily.

The protein operates within cofactor biosynthesis; adenosylcobalamin biosynthesis. Functionally, catalyzes amidations at positions B, D, E, and G on adenosylcobyrinic A,C-diamide. NH(2) groups are provided by glutamine, and one molecule of ATP is hydrogenolyzed for each amidation. The polypeptide is Probable cobyric acid synthase (Methanosphaera stadtmanae (strain ATCC 43021 / DSM 3091 / JCM 11832 / MCB-3)).